A 112-amino-acid polypeptide reads, in one-letter code: Transmembrane protein 14C (112 aa).

4 consecutive transmembrane segments (helical) span residues 7–27 (VVPL…GGII), 32–52 (AGSV…GLGA), 62–82 (VWVF…RFYH), and 88–108 (PAGL…VSMF).

The protein belongs to the TMEM14 family.

It is found in the mitochondrion membrane. Required for normal heme biosynthesis. The chain is Transmembrane protein 14C (TMEM14C) from Homo sapiens (Human).